The primary structure comprises 96 residues: Gastrolith matrix protein (96 aa).

Tandem repeats lie at residues glycine 11 to phenylalanine 15, glycine 16 to phenylalanine 20, glycine 21 to phenylalanine 25, glycine 30 to phenylalanine 34, glycine 35 to phenylalanine 39, glycine 50 to phenylalanine 54, glycine 55 to phenylalanine 59, glycine 65 to phenylalanine 69, and glycine 70 to phenylalanine 74. The tract at residues glycine 11–phenylalanine 74 is 9 X 5 AA tandem repeat of G-S-X-X-F. The tract at residues glycine 75–arginine 96 is disordered.

In terms of processing, the N-terminus is blocked. Expressed in the gastroliths.

The protein resides in the secreted. Associates with chitin and plays a role in calcification. The sequence is that of Gastrolith matrix protein from Procambarus clarkii (Red swamp crayfish).